The primary structure comprises 749 residues: Protein lin-54 homolog (749 aa).

K139 participates in a covalent cross-link: Glycyl lysine isopeptide (Lys-Gly) (interchain with G-Cter in SUMO2). Residues K244 and K249 each carry the N6-acetyllysine modification. Residues S264, S282, S310, and S314 each carry the phosphoserine modification. A Glycyl lysine isopeptide (Lys-Gly) (interchain with G-Cter in SUMO2) cross-link involves residue K357. The region spanning 521–634 (PRKPCNCTKS…KCIGCKNFEE (114 aa)) is the CRC domain. Residues 523-536 (KPCNCTKSLCLKLY) form a DNA-binding region. The Zn(2+) site is built by C525, C527, C532, C537, C539, C546, C549, C551, and C554. The linker stretch occupies residues 583–596 (IGKGKEGESDRRHS). Residues C599, C601, C606, C611, C613, C620, C624, C626, and C629 each coordinate Zn(2+). A DNA-binding region spans residues 599-612 (CNCKRSGCLKNYCE). Phosphoserine is present on S635. Glycyl lysine isopeptide (Lys-Gly) (interchain with G-Cter in SUMO2) cross-links involve residues K639, K659, and K661.

The protein belongs to the lin-54 family. In terms of assembly, component of the DREAM complex (also named LINC complex) at least composed of E2F4, E2F5, LIN9, LIN37, LIN52, LIN54, MYBL1, MYBL2, RBL1, RBL2, RBBP4, RBL2, TFDP1 and TFDP2. The complex exists in quiescent cells where it represses cell cycle-dependent genes. It dissociates in S phase when LIN9, LIN37, LIN52 and LIN54 form a subcomplex that binds to MYBL2.

Its subcellular location is the nucleus. Its function is as follows. Component of the DREAM complex, a multiprotein complex that can both act as a transcription activator or repressor depending on the context. In G0 phase, the complex binds to more than 800 promoters and is required for repression of E2F target genes. In S phase, the complex selectively binds to the promoters of G2/M genes whose products are required for mitosis and participates in their cell cycle dependent activation. In the complex, acts as a DNA-binding protein that binds the promoter of CDK1 in a sequence-specific manner. Specifically recognizes the consensus motif 5'-TTYRAA-3' in target DNA. In Mus musculus (Mouse), this protein is Protein lin-54 homolog (Lin54).